Here is a 1295-residue protein sequence, read N- to C-terminus: Phosphoribosylformylglycinamidine synthase (1295 aa).

Residues 305–327 (WPGAATGSGGEIRDEGATGRGAK) are disordered. Residues 307–318 (GAATGSGGEIRD), 386–388 (TGY), and Ala-678 each bind ATP. Mg(2+) is bound by residues Asp-679, Glu-718, Asn-722, and Asp-884. Ser-886 is a binding site for ATP. One can recognise a Glutamine amidotransferase type-1 domain in the interval 1042 to 1295 (VAVLREQGVN…IFRNARKQLG (254 aa)). Residue Cys-1135 is the Nucleophile of the active site. Active-site residues include His-1260 and Glu-1262.

This sequence in the N-terminal section; belongs to the FGAMS family. In terms of assembly, monomer.

The protein resides in the cytoplasm. It catalyses the reaction N(2)-formyl-N(1)-(5-phospho-beta-D-ribosyl)glycinamide + L-glutamine + ATP + H2O = 2-formamido-N(1)-(5-O-phospho-beta-D-ribosyl)acetamidine + L-glutamate + ADP + phosphate + H(+). It functions in the pathway purine metabolism; IMP biosynthesis via de novo pathway; 5-amino-1-(5-phospho-D-ribosyl)imidazole from N(2)-formyl-N(1)-(5-phospho-D-ribosyl)glycinamide: step 1/2. Its function is as follows. Phosphoribosylformylglycinamidine synthase involved in the purines biosynthetic pathway. Catalyzes the ATP-dependent conversion of formylglycinamide ribonucleotide (FGAR) and glutamine to yield formylglycinamidine ribonucleotide (FGAM) and glutamate. The sequence is that of Phosphoribosylformylglycinamidine synthase from Salmonella typhimurium (strain LT2 / SGSC1412 / ATCC 700720).